The following is a 1032-amino-acid chain: MARLGRFGFLALAVVFHLIYAYSIFDIYFVSPIVSGMRSYGVEREPGAKAPASRLVLFVADGLRADKAFQPAPDPSPEDGEDAENNDPIYLAPFIRSRVLSHGTFGVSHTRVPTESRPGHVALIAGLYEDVSAVTTGWKLNPVNFDSVFNQSRHTWSWGSPDILAMFKEGAVPGRVDADMYGEEIEDFTMDATQLDTWVFNKVKELFASAKSDPELDAKLRQDKVVFFLHLLGLDTTGHGYRPYSREYLHNIKIVDKGVQEIATLIEEFYGDDRTAFVFTADHGMSDWGSHGDGHPDNTRTPLVVWGSGVAGPKYTDGKAVTGHEDGFSADWGLDGIQRHDVAQADVAALMAYLAGLDFPVNSVGQLPLEYIDASPKEKALAALANTQEVLEMYRVKEAQKRAALLRYKPFEPLADHGKNSVEEHIAEIQVLIANGSYDEPIKRSGALFATALEGLRYLQTYDWLFLRTIITFGYLGWIAYALTTVIDLHVLHRTSDSKRTVGSTIFFTSILAALFSVLLYQKSSWQYYVYGAFPIFFWEEVFARRKALIAGREILLGHVRSFGGYIASGFQLVAFVAVLEALLMRHQVQSYFHREIYTVCFVLGSFWPILYGVDFVRQNTVLSATWAVGCSLMSTFTLLPVIKVENINTITYGALLMFFTGLFYLLFEDTILKHSKSSGHAPGAISSLGSRVIMGMQVGMVLLALIVTRSSVSSLQAKQGLPFGNQVVGWFVLVASLVLPFFHRLYPNSHYLHRLMVLFLTFSPTFIILTISYEGLFYFVFCMTLVTWVRLEHAIYVYTARSSAHYGGNNTVPKKPGLNATAVIDGQEYRYRRLGLADTRVALFFFFLLQSAFFSTGNIASVSSFSLESVFRLIPVFSPFSQSALLILKLLIPFAIISANLGILNRRLEVAPSALFMVVMSISDVMTLNFFYMVRDEGSWLDIGTTISHFLIASFLCTFVAGLEFLSEVFISGVDFGPTTKAIGASITKTVGGTAGSDVVDSQSGPEDAANSKKAEGLEGSETIRQNGGSV.

Residues 1–6 (MARLGR) are Cytoplasmic-facing. Residues 7–27 (FGFLALAVVFHLIYAYSIFDI) form a helical membrane-spanning segment. At 28–468 (YFVSPIVSGM…LQTYDWLFLR (441 aa)) the chain is on the lumenal side. Residues asparagine 150 and asparagine 435 are each glycosylated (N-linked (GlcNAc...) asparagine). The helical transmembrane segment at 469–489 (TIITFGYLGWIAYALTTVIDL) threads the bilayer. The Cytoplasmic segment spans residues 490 to 500 (HVLHRTSDSKR). A helical membrane pass occupies residues 501 to 521 (TVGSTIFFTSILAALFSVLLY). Over 522–523 (QK) the chain is Lumenal. Residues 524–544 (SSWQYYVYGAFPIFFWEEVFA) traverse the membrane as a helical segment. Topologically, residues 545–564 (RRKALIAGREILLGHVRSFG) are cytoplasmic. A helical transmembrane segment spans residues 565 to 585 (GYIASGFQLVAFVAVLEALLM). Residues 586–596 (RHQVQSYFHRE) lie on the Lumenal side of the membrane. Residues 597-617 (IYTVCFVLGSFWPILYGVDFV) traverse the membrane as a helical segment. Residues 618–622 (RQNTV) lie on the Cytoplasmic side of the membrane. A helical transmembrane segment spans residues 623 to 643 (LSATWAVGCSLMSTFTLLPVI). Over 644-647 (KVEN) the chain is Lumenal. A helical transmembrane segment spans residues 648–668 (INTITYGALLMFFTGLFYLLF). The Cytoplasmic segment spans residues 669-688 (EDTILKHSKSSGHAPGAISS). Residues 689-709 (LGSRVIMGMQVGMVLLALIVT) form a helical membrane-spanning segment. Residues 710 to 722 (RSSVSSLQAKQGL) lie on the Lumenal side of the membrane. Residues 723 to 743 (PFGNQVVGWFVLVASLVLPFF) form a helical membrane-spanning segment. At 744–766 (HRLYPNSHYLHRLMVLFLTFSPT) the chain is on the cytoplasmic side. Residues 767-787 (FIILTISYEGLFYFVFCMTLV) form a helical membrane-spanning segment. Topologically, residues 788–841 (TWVRLEHAIYVYTARSSAHYGGNNTVPKKPGLNATAVIDGQEYRYRRLGLADTR) are lumenal. 2 N-linked (GlcNAc...) asparagine glycosylation sites follow: asparagine 810 and asparagine 820. The chain crosses the membrane as a helical span at residues 842–862 (VALFFFFLLQSAFFSTGNIAS). The Cytoplasmic portion of the chain corresponds to 863-884 (VSSFSLESVFRLIPVFSPFSQS). The helical transmembrane segment at 885–905 (ALLILKLLIPFAIISANLGIL) threads the bilayer. Topologically, residues 906-914 (NRRLEVAPS) are lumenal. Residues 915 to 935 (ALFMVVMSISDVMTLNFFYMV) form a helical membrane-spanning segment. The Cytoplasmic segment spans residues 936-951 (RDEGSWLDIGTTISHF). The chain crosses the membrane as a helical span at residues 952 to 972 (LIASFLCTFVAGLEFLSEVFI). Over 973–1032 (SGVDFGPTTKAIGASITKTVGGTAGSDVVDSQSGPEDAANSKKAEGLEGSETIRQNGGSV) the chain is Lumenal. Residues 994-1032 (GTAGSDVVDSQSGPEDAANSKKAEGLEGSETIRQNGGSV) form a disordered region.

This sequence belongs to the PIGG/PIGN/PIGO family. PIGN subfamily.

It is found in the endoplasmic reticulum membrane. Its pathway is glycolipid biosynthesis; glycosylphosphatidylinositol-anchor biosynthesis. Its function is as follows. Ethanolamine phosphate transferase involved in glycosylphosphatidylinositol-anchor biosynthesis. Transfers ethanolamine phosphate to the first alpha-1,4-linked mannose of the glycosylphosphatidylinositol precursor of GPI-anchor. The sequence is that of GPI ethanolamine phosphate transferase 1 (mcd4) from Aspergillus fumigatus (strain ATCC MYA-4609 / CBS 101355 / FGSC A1100 / Af293) (Neosartorya fumigata).